Reading from the N-terminus, the 238-residue chain is Small ribosomal subunit protein uS2c (238 aa).

It belongs to the universal ribosomal protein uS2 family.

The protein resides in the plastid. It localises to the chloroplast. In Jasminum nudiflorum (Winter jasmine), this protein is Small ribosomal subunit protein uS2c (rps2).